The chain runs to 427 residues: MLDIQLLRTQIDAVAAALAARGANFDAAAFQSMENERKTLQTRTQDLQARRNTLSKQIGVLKSRGEDASAAMAEVGGIGDELKANEQALATLLERINAFVAGLPNLPHDSVPPGRDESANVEIARWGTPREFDFEVSDHVDIGSGLGGLDFETAAKISGSRFALMRDGLARLHRALAQFMLDVHTREHGYTEVHVPYLVNPDSMFGTGQLPKFEAELFSVMKDDGRFYLIPTAEVPITNIVRNELLAHDVLPLKFVGHTPCFRSEAGSYGRDTRGMIRQHQFDKVELVRIEHPDASWAALEELTGHAEAILRKLELPYRKVVLCTGDMGFSAAKTYDLEVWLPAQKTYREISSCSCTGAFQARRMQARFRNTQGKNELVHTLNGSGLAVGRTLVAVLENYQQADGSVVVPKVLVPWMGGIEVLEPRG.

Position 232 to 234 (232 to 234 (TAE)) interacts with L-serine. 263 to 265 (RSE) is a binding site for ATP. Glutamate 286 contributes to the L-serine binding site. 350-353 (EISS) contacts ATP. Position 385 (serine 385) interacts with L-serine.

The protein belongs to the class-II aminoacyl-tRNA synthetase family. Type-1 seryl-tRNA synthetase subfamily. As to quaternary structure, homodimer. The tRNA molecule binds across the dimer.

It localises to the cytoplasm. The enzyme catalyses tRNA(Ser) + L-serine + ATP = L-seryl-tRNA(Ser) + AMP + diphosphate + H(+). It carries out the reaction tRNA(Sec) + L-serine + ATP = L-seryl-tRNA(Sec) + AMP + diphosphate + H(+). Its pathway is aminoacyl-tRNA biosynthesis; selenocysteinyl-tRNA(Sec) biosynthesis; L-seryl-tRNA(Sec) from L-serine and tRNA(Sec): step 1/1. Its function is as follows. Catalyzes the attachment of serine to tRNA(Ser). Is also able to aminoacylate tRNA(Sec) with serine, to form the misacylated tRNA L-seryl-tRNA(Sec), which will be further converted into selenocysteinyl-tRNA(Sec). The chain is Serine--tRNA ligase from Aromatoleum aromaticum (strain DSM 19018 / LMG 30748 / EbN1) (Azoarcus sp. (strain EbN1)).